We begin with the raw amino-acid sequence, 427 residues long: Extracellular superoxide dismutase [Cu-Zn] 2 (427 aa).

An N-terminal signal peptide occupies residues 1–20; that stretch reads MNKLIISLLIVLSAISIISA. The Extracellular portion of the chain corresponds to 21–406; sequence DYQYGYCKFG…PTETSQPGTS (386 aa). Asparagine 38, asparagine 57, asparagine 81, asparagine 190, and asparagine 218 each carry an N-linked (GlcNAc...) asparagine glycan. Cu cation-binding residues include histidine 257, histidine 259, and histidine 275. Histidine 275 and histidine 283 together coordinate Zn(2+). Residue asparagine 288 is glycosylated (N-linked (GlcNAc...) asparagine). 2 residues coordinate Zn(2+): histidine 292 and aspartate 295. Histidine 331 is a binding site for Cu cation. A glycan (N-linked (GlcNAc...) asparagine) is linked at asparagine 376. Residues 381–404 are disordered; sequence GESTIEPSPTPSTTPTPTETSQPG. The segment covering 395–404 has biased composition (low complexity); it reads PTPTETSQPG. Residues 407–426 traverse the membrane as a helical segment; sequence SYLAPFFVLILSSLISVILI. Residue leucine 427 is a topological domain, cytoplasmic.

The protein belongs to the Cu-Zn superoxide dismutase family. Cu cation serves as cofactor. It depends on Zn(2+) as a cofactor.

The protein localises to the cell membrane. The catalysed reaction is 2 superoxide + 2 H(+) = H2O2 + O2. Its function is as follows. Protect the extracellular space from toxic effect of reactive oxygen intermediates by converting superoxyde radicals into hydrogen peroxyde and oxygen. The polypeptide is Extracellular superoxide dismutase [Cu-Zn] 2 (sodB) (Dictyostelium discoideum (Social amoeba)).